Reading from the N-terminus, the 576-residue chain is Probable DNA ligase (576 aa).

E235 is a binding site for ATP. The active-site N6-AMP-lysine intermediate is K237. The ATP site is built by R242, R257, E285, F324, R422, and K428.

The protein belongs to the ATP-dependent DNA ligase family. It depends on Mg(2+) as a cofactor.

It catalyses the reaction ATP + (deoxyribonucleotide)n-3'-hydroxyl + 5'-phospho-(deoxyribonucleotide)m = (deoxyribonucleotide)n+m + AMP + diphosphate.. DNA ligase that seals nicks in double-stranded DNA during DNA replication, DNA recombination and DNA repair. The sequence is that of Probable DNA ligase from Koribacter versatilis (strain Ellin345).